Reading from the N-terminus, the 160-residue chain is Endoribonuclease YbeY (160 aa).

Residues His-127, His-131, and His-137 each contribute to the Zn(2+) site.

The protein belongs to the endoribonuclease YbeY family. Requires Zn(2+) as cofactor.

It localises to the cytoplasm. Single strand-specific metallo-endoribonuclease involved in late-stage 70S ribosome quality control and in maturation of the 3' terminus of the 16S rRNA. The sequence is that of Endoribonuclease YbeY from Synechococcus sp. (strain RCC307).